Here is a 514-residue protein sequence, read N- to C-terminus: Thymus-specific serine protease (514 aa).

The N-terminal stretch at 1–24 is a signal peptide; sequence MAVWLAQWLGPLLLVSLWGLLAPA. N-linked (GlcNAc...) asparagine glycans are attached at residues Asn-70 and Asn-172. Catalysis depends on Ser-185, which acts as the Charge relay system. N-linked (GlcNAc...) asparagine glycosylation is present at Asn-321. Catalysis depends on charge relay system residues Asp-447 and His-472.

Belongs to the peptidase S28 family. As to expression, expressed predominantly in cortical thymic epithelial cells.

Its subcellular location is the cytoplasmic vesicle. Its function is as follows. Protease that may play a role in T-cell development. The polypeptide is Thymus-specific serine protease (PRSS16) (Homo sapiens (Human)).